Consider the following 981-residue polypeptide: Ubiquitin carboxyl-terminal hydrolase 15 (981 aa).

Alanine 2 carries the N-acetylalanine modification. Residues 2 to 223 (AEGGAADLDT…KNEDGTWPRG (222 aa)) form a mediates interaction with SART3 region. A DUSP domain is found at 7–118 (ADLDTQRSDI…GQEPIARKVV (112 aa)). A disordered region spans residues 216-237 (EDGTWPRGPSTPKSPGASNFST). Threonine 226 is modified (phosphothreonine). Positions 226 to 237 (TPKSPGASNFST) are enriched in polar residues. Residues serine 229 and serine 242 each carry the phosphoserine modification. In terms of domain architecture, USP spans 289–933 (CGLSNLGNTC…AAYVLFYQRQ (645 aa)). The Nucleophile role is filled by cysteine 298. A Phosphothreonine modification is found at threonine 602. Residues 629–694 (GSLHCCKDQN…GGDNDSENGL (66 aa)) are disordered. The segment covering 656 to 673 (METDEPDDESSQDQELPS) has biased composition (acidic residues). The Proton acceptor role is filled by histidine 891. Residues 952–981 (SAATGIPLESDEDSNDNDNDIENENCMHTN) form a disordered region. Over residues 960-974 (ESDEDSNDNDNDIEN) the composition is skewed to acidic residues. 2 positions are modified to phosphoserine: serine 961 and serine 965.

It belongs to the peptidase C19 family. A homodimer structure has been reported; however it is unclear whether the protein form a homodimer in vivo. Identified in a complex with the COP9 signalosome complex (CSN). Interacts with SMAD1, SMAD2 and SMAD3; the interaction is direct. Forms a complex with SMURF2 and SMAD7. Interacts with TGFBR1. Interacts with SART3; the interaction is direct. May interact with RNF20 and RNF40. May interact with PRKN. Interacts with INCA1. As to quaternary structure, (Microbial infection) Interacts with human papillomavirus type 16 protein E6. In terms of processing, phosphorylated. Phosphorylation protects against ubiquitination and subsequent degradation by the proteasome. Ubiquitinated, leading to degradation by the proteasome. Expressed in skeletal muscle, kidney, heart, placenta, liver, thymus, lung, and ovary, with little or no expression in other tissues.

The protein localises to the cytoplasm. It is found in the nucleus. Its subcellular location is the mitochondrion. The enzyme catalyses Thiol-dependent hydrolysis of ester, thioester, amide, peptide and isopeptide bonds formed by the C-terminal Gly of ubiquitin (a 76-residue protein attached to proteins as an intracellular targeting signal).. Hydrolase that removes conjugated ubiquitin from target proteins and regulates various pathways such as the TGF-beta receptor signaling, NF-kappa-B and RNF41/NRDP1-PRKN pathways. Acts as a key regulator of TGF-beta receptor signaling pathway, but the precise mechanism is still unclear: according to a report, acts by promoting deubiquitination of monoubiquitinated R-SMADs (SMAD1, SMAD2 and/or SMAD3), thereby alleviating inhibition of R-SMADs and promoting activation of TGF-beta target genes. According to another reports, regulates the TGF-beta receptor signaling pathway by mediating deubiquitination and stabilization of TGFBR1, leading to an enhanced TGF-beta signal. Able to mediate deubiquitination of monoubiquitinated substrates, 'Lys-27'-, 'Lys-48'- and 'Lys-63'-linked polyubiquitin chains. May also regulate gene expression and/or DNA repair through the deubiquitination of histone H2B. Acts as an inhibitor of mitophagy by counteracting the action of parkin (PRKN): hydrolyzes cleavage of 'Lys-48'- and 'Lys-63'-linked polyubiquitin chains attached by parkin on target proteins such as MFN2, thereby reducing parkin's ability to drive mitophagy. Acts as an associated component of COP9 signalosome complex (CSN) and regulates different pathways via this association: regulates NF-kappa-B by mediating deubiquitination of NFKBIA and deubiquitinates substrates bound to VCP. Involved in endosome organization by mediating deubiquitination of SQSTM1: ubiquitinated SQSTM1 forms a molecular bridge that restrains cognate vesicles in the perinuclear region and its deubiquitination releases target vesicles for fast transport into the cell periphery. Acts as a negative regulator of antifungal immunity by mediating 'Lys-27'-linked deubiquitination of CARD9, thereby inactivating CARD9. Its function is as follows. (Microbial infection) Protects APC and human papillomavirus type 16 protein E6 against degradation via the ubiquitin proteasome pathway. The protein is Ubiquitin carboxyl-terminal hydrolase 15 of Homo sapiens (Human).